Here is a 76-residue protein sequence, read N- to C-terminus: RNA-binding protein KhpA (76 aa).

One can recognise a KH domain in the interval 29-76 (QNIIELRVSPKDVGKVIGKNGRIAKSLRAILTAASVKAGKNFSLEIID).

It belongs to the KhpA RNA-binding protein family. As to quaternary structure, forms a complex with KhpB.

It is found in the cytoplasm. In terms of biological role, a probable RNA chaperone. Forms a complex with KhpB which binds to cellular RNA and controls its expression. Plays a role in peptidoglycan (PG) homeostasis and cell length regulation. In Leptospira interrogans serogroup Icterohaemorrhagiae serovar copenhageni (strain Fiocruz L1-130), this protein is RNA-binding protein KhpA.